Here is a 183-residue protein sequence, read N- to C-terminus: Ubiquinol-cytochrome c reductase iron-sulfur subunit (183 aa).

A helical membrane pass occupies residues 21–41 (LIYGTTAVGAVGVALAVWPFI). Residues 88-181 (IVVARAVDPA…YAFTDDTTVL (94 aa)) enclose the Rieske domain. The [2Fe-2S] cluster site is built by C121, H123, C145, and H148. A disulfide bond links C126 and C147.

It belongs to the Rieske iron-sulfur protein family. The main subunits of complex b-c1 are: cytochrome b, cytochrome c1 and the Rieske protein. The cofactor is [2Fe-2S] cluster.

The protein resides in the cell inner membrane. The catalysed reaction is a quinol + 2 Fe(III)-[cytochrome c](out) = a quinone + 2 Fe(II)-[cytochrome c](out) + 2 H(+)(out). Functionally, component of the ubiquinol-cytochrome c reductase complex (complex III or cytochrome b-c1 complex), which is a respiratory chain that generates an electrochemical potential coupled to ATP synthesis. This chain is Ubiquinol-cytochrome c reductase iron-sulfur subunit (petA), found in Rhodospirillum rubrum.